A 630-amino-acid polypeptide reads, in one-letter code: MSSNKPYVIKGIPVDAGQIIPVRRDIDEWYEDTSRQSRIQLSIFIWALREFQSIDYKDRLSYFQIAGIHHFPLITWDEEEPPVPNKPGYCVHNNVTFPTWHRPYMLLFEQRLFEIMETTIKETVPESHKQEWRDAARQWRLPYWDFAKTSGPHATGPLSLPVLCGLANVVILNPANPETPIELPNPVYKYRAPDLMGNLDKPFHIPPERIDPDKDDYYPWDKCQATTKYGLLKNNPHIQDAGQDVTKSNLALNEHPWYRPNKAGFPPLQTLTYEVHRLLSFKFSSWGAFASTKWCNEENKPPASQQTRDILSLEYIHNNVHNWVGGTDYLGDPSKPDLQGAGHMSSVPVAAFDPIFWLYHNNVDRLTAIWQVLNQDHWFDEPHPSDAKPDDPLKPFHVSKDKYFTSDDARFWRKYGYDYDIVKKPGTNEDRAPEEVKMKINQLYGEPISRLHEGQPVEYDYVINVIYDRYALDGIPYTIVFYLHLKDGSYKCLGGVYTFSTKLSDAQDTERGGCDNCREQKKAGVLASAQIPLTYTLYERQEWHNLGKLLPVKETADIIRQHLCWKVVGVNNSILFDSEQPMRGDPATWRSLDVTAAYSEIHYPVDRNYKYIDRGLPAYHNYLPIHLSPT.

6 residues coordinate Cu cation: histidine 69, histidine 92, histidine 101, histidine 317, histidine 321, and histidine 360. Positions 90–92 (CVH) form a cross-link, 2'-(S-cysteinyl)-histidine (Cys-His).

Belongs to the tyrosinase family. Cu(2+) serves as cofactor.

It catalyses the reaction 2 L-dopa + O2 = 2 L-dopaquinone + 2 H2O. It carries out the reaction L-tyrosine + O2 = L-dopaquinone + H2O. Functionally, this is a copper-containing oxidase that functions in the formation of pigments such as melanins and other polyphenolic compounds. The sequence is that of Tyrosinase (tyr1) from Aspergillus fumigatus (strain ATCC MYA-4609 / CBS 101355 / FGSC A1100 / Af293) (Neosartorya fumigata).